A 176-amino-acid polypeptide reads, in one-letter code: Inner membrane-spanning protein YciB (176 aa).

Helical transmembrane passes span 22–42, 50–70, 81–101, 121–141, and 149–169; these read IYYA…YTWL, VALI…YYHN, IYSL…KPLI, IAWA…AFWL, and FKVF…GIYI.

It belongs to the YciB family.

Its subcellular location is the cell inner membrane. Plays a role in cell envelope biogenesis, maintenance of cell envelope integrity and membrane homeostasis. This is Inner membrane-spanning protein YciB from Sodalis glossinidius (strain morsitans).